A 547-amino-acid polypeptide reads, in one-letter code: Elongator complex protein 3 (547 aa).

A Radical SAM core domain is found at Arg82–Pro372. Cys99, Cys109, and Cys112 together coordinate [4Fe-4S] cluster. Ser161 bears the Phosphoserine mark. Lys164 contacts acetyl-CoA. Lys229 carries the N6-methyllysine modification. Residue Tyr251 is modified to Phosphotyrosine. Positions Ile396–Lys547 constitute an N-acetyltransferase domain. Acetyl-CoA contacts are provided by residues Glu474 to Val477, Phe497 to Met499, and Tyr530.

It belongs to the ELP3 family. As to quaternary structure, component of the elongator complex which consists of ELP1, ELP2, ELP3, ELP4, ELP5 and ELP6. ELP1, ELP2 and ELP3 form the elongator core complex. Interacts with alpha-tubulin. Requires [4Fe-4S] cluster as cofactor. Post-translationally, tyrosine-phosphorylated. Also serine/threonine-phosphorylated.

It is found in the cytoplasm. The protein localises to the nucleus. The enzyme catalyses uridine(34) in tRNA + acetyl-CoA + S-adenosyl-L-methionine + H2O = 5-(carboxymethyl)uridine(34) in tRNA + 5'-deoxyadenosine + L-methionine + CoA + 2 H(+). Its pathway is tRNA modification; 5-methoxycarbonylmethyl-2-thiouridine-tRNA biosynthesis. Functionally, catalytic tRNA acetyltransferase subunit of the elongator complex which is required for multiple tRNA modifications, including mcm5U (5-methoxycarbonylmethyl uridine), mcm5s2U (5-methoxycarbonylmethyl-2-thiouridine), and ncm5U (5-carbamoylmethyl uridine). In the elongator complex, acts as a tRNA uridine(34) acetyltransferase by mediating formation of carboxymethyluridine in the wobble base at position 34 in tRNAs. May also act as a protein lysine acetyltransferase by mediating acetylation of target proteins; such activity is however unclear in vivo and recent evidences suggest that ELP3 primarily acts as a tRNA acetyltransferase. Involved in neurogenesis: regulates the migration and branching of projection neurons in the developing cerebral cortex, through a process depending on alpha-tubulin acetylation. Required for acetylation of GJA1 in the developing cerebral cortex. The protein is Elongator complex protein 3 of Mus musculus (Mouse).